The primary structure comprises 344 residues: Uroporphyrinogen decarboxylase (344 aa).

Substrate-binding positions include 29–33 (RQAGR), Asp79, Tyr153, Ser208, and His324.

It belongs to the uroporphyrinogen decarboxylase family. Homodimer.

It localises to the cytoplasm. It catalyses the reaction uroporphyrinogen III + 4 H(+) = coproporphyrinogen III + 4 CO2. The protein operates within porphyrin-containing compound metabolism; protoporphyrin-IX biosynthesis; coproporphyrinogen-III from 5-aminolevulinate: step 4/4. Functionally, catalyzes the decarboxylation of four acetate groups of uroporphyrinogen-III to yield coproporphyrinogen-III. This chain is Uroporphyrinogen decarboxylase, found in Rhizorhabdus wittichii (strain DSM 6014 / CCUG 31198 / JCM 15750 / NBRC 105917 / EY 4224 / RW1) (Sphingomonas wittichii).